A 491-amino-acid polypeptide reads, in one-letter code: Probable CtpA-like serine protease (491 aa).

The disordered stretch occupies residues 1–22; sequence MNDHQKNHATSQDDNTKSTPSK. A compositionally biased stretch (polar residues) spans 8–22; that stretch reads HATSQDDNTKSTPSK. A helical membrane pass occupies residues 31–51; the sequence is LWHFILVILGIILLTSIITVV. Residues 119-201 enclose the PDZ domain; the sequence is TKQFNEGVSG…TYVTLTIKRG (83 aa). Residues Ser324, Asp335, and Lys349 each act as charge relay system in the active site.

It belongs to the peptidase S41A family.

The protein resides in the cell membrane. The protein is Probable CtpA-like serine protease of Staphylococcus epidermidis (strain ATCC 35984 / DSM 28319 / BCRC 17069 / CCUG 31568 / BM 3577 / RP62A).